Consider the following 496-residue polypeptide: GTPase Der (496 aa).

EngA-type G domains follow at residues 3–166 and 208–381; these read PVVA…FDNL and IKLA…RSAT. Residues 9-16, 56-60, 118-121, 214-221, 261-265, and 326-329 each bind GTP; these read GRPNVGKS, DTGGI, NKVD, DTAGV, and NKWD. In terms of domain architecture, KH-like spans 382–466; that stretch reads TRVGTSVLTR…PIRIQFQNSD (85 aa).

It belongs to the TRAFAC class TrmE-Era-EngA-EngB-Septin-like GTPase superfamily. EngA (Der) GTPase family. In terms of assembly, associates with the 50S ribosomal subunit.

In terms of biological role, GTPase that plays an essential role in the late steps of ribosome biogenesis. The chain is GTPase Der from Vibrio vulnificus (strain YJ016).